The sequence spans 223 residues: Homeobox protein egl-5 (223 aa).

Positions 1–25 are enriched in low complexity; the sequence is MNTSTSAFDFGSSTASSAATSTTSS. Disordered regions lie at residues 1–58 and 168–191; these read MNTS…STEA and KKEKQRVDDHTEHTPLLPANPPKG. Positions 112-171 form a DNA-binding region, homeobox; the sequence is SKKGRQTYQRYQTSVLEAKFQQSSYVSKKQREELRLQTQLTDRQIKIWFQNRRMKAKKEK.

It belongs to the Abd-B homeobox family. In terms of assembly, interacts with the TCF transcription factor pop-1.

The protein localises to the nucleus. Its function is as follows. Involved in control of cell fate and pattern formation along the anterior-posterior axis, acting mainly in the tail. Required during embryonic and postembryonic development. Essential for the determination of specific neurons, including the PLM touch neurons. Plays a role in neural fate specification in the hermaphrodite-specific neuron (HSN)/PHB neuron lineage, acting in concert with T-box protein tbx-2 and the asymmetric cell division protein ham-1. Required for male gonadal fate determination, acting in parallel with a WNT/beta-catenin pathway, perhaps by recruiting pop-1 to male-specific gonadal target genes. Involved in development of the hermaphrodite hindgut, and for the response to rectal infection by the coryneform bacterium M.nematophilum. This is Homeobox protein egl-5 from Caenorhabditis elegans.